The chain runs to 444 residues: S-locus-specific glycoprotein (444 aa).

The first 28 residues, 1–28 (MRGVIPNYHHSYTLFFFVILVLFPHVFS), serve as a signal peptide directing secretion. One can recognise a Bulb-type lectin domain in the interval 31-159 (TLSPNEALTI…KTNDLDRFMW (129 aa)). N-linked (GlcNAc...) asparagine glycans are attached at residues Asn-43, Asn-125, Asn-243, and Asn-396. A PAN domain is found at 356–437 (CGEGDGFLRM…GGQDLYVKVA (82 aa)). Cystine bridges form between Cys-387–Cys-412 and Cys-395–Cys-397.

In terms of tissue distribution, stigma.

Involved in sporophytic self-incompatibility system (the inability of flowering plants to achieve self-fertilization). The polypeptide is S-locus-specific glycoprotein (SLSG) (Brassica oleracea var. alboglabra (Chinese kale)).